Consider the following 386-residue polypeptide: Homoserine O-succinyltransferase (386 aa).

Residues 49–358 (NAILICHALS…DAEQGHDSFL (310 aa)) enclose the AB hydrolase-1 domain. Ser156 functions as the Nucleophile in the catalytic mechanism. Arg226 contributes to the substrate binding site. Catalysis depends on residues Asp321 and His354. Asp355 is a binding site for substrate.

The protein belongs to the AB hydrolase superfamily. MetX family. In terms of assembly, homodimer.

Its subcellular location is the cytoplasm. It catalyses the reaction L-homoserine + succinyl-CoA = O-succinyl-L-homoserine + CoA. The protein operates within amino-acid biosynthesis; L-methionine biosynthesis via de novo pathway; O-succinyl-L-homoserine from L-homoserine: step 1/1. In terms of biological role, transfers a succinyl group from succinyl-CoA to L-homoserine, forming succinyl-L-homoserine. This chain is Homoserine O-succinyltransferase, found in Acinetobacter baumannii (strain SDF).